Consider the following 342-residue polypeptide: Ferrochelatase (342 aa).

His-188 and Glu-268 together coordinate Fe cation.

Belongs to the ferrochelatase family.

It is found in the cytoplasm. It catalyses the reaction heme b + 2 H(+) = protoporphyrin IX + Fe(2+). The protein operates within porphyrin-containing compound metabolism; protoheme biosynthesis; protoheme from protoporphyrin-IX: step 1/1. Functionally, catalyzes the ferrous insertion into protoporphyrin IX. This chain is Ferrochelatase, found in Rickettsia conorii (strain ATCC VR-613 / Malish 7).